Here is a 567-residue protein sequence, read N- to C-terminus: MTEPTSRPDIKPRSRDVTDGLEKAAARGMLRAVGMGDEDFAKPQIGVGSSWNEITPCNLSLDRLAKAVKNGVHAAGGYPLEFGTISVSDGISMGHEGMHFSLVSREVIADSVETVMMAERLDGSVLLAGCDKSLPGMMMAAARLDLASVFLYAGSTMPGQVDGNDVTIIDAFEAVGACLAGKISRDEVDRIERAICPGEGACGGMYTANTMASIAEAIGMSLPGSAAPPAVDRRRDGFAHRSGEAVVNLLRQGITARQIMTRAAFENAITVAMALGGSTNAVLHLLAMAREADVDLTIDDFNRIGDKVPHLGDLKPFGKYVMNDVDKIGGIPVVMKALLDAGLMHGDALTVTGKTLAENLAELAPPELDDEVIRKLDRPIHKTGGLTILKGSLAPEGAVVKTAGFDDSVFTGTARVFDGERAAMDALEAGQIQPRDVVVIRYEGPKGGPGMREMLAITGAIKGAGLGKDVLLITDGRFSGGTTGLCVGHIAPEAVDGGPIAFVRDGDQITLDVANRLLEVEVVGPDAEAEWERRKVGWEPNPPKYTRGVLGKYAKIVQSAAHGAITG.

Residue Cys57 coordinates [2Fe-2S] cluster. Asp89 lines the Mg(2+) pocket. Cys130 provides a ligand contact to [2Fe-2S] cluster. Mg(2+) is bound by residues Asp131 and Lys132. At Lys132 the chain carries N6-carboxylysine. Cys202 lines the [2Fe-2S] cluster pocket. Glu453 serves as a coordination point for Mg(2+). Catalysis depends on Ser479, which acts as the Proton acceptor.

It belongs to the IlvD/Edd family. Homodimer. Requires [2Fe-2S] cluster as cofactor. Mg(2+) serves as cofactor.

It carries out the reaction (2R)-2,3-dihydroxy-3-methylbutanoate = 3-methyl-2-oxobutanoate + H2O. It catalyses the reaction (2R,3R)-2,3-dihydroxy-3-methylpentanoate = (S)-3-methyl-2-oxopentanoate + H2O. Its pathway is amino-acid biosynthesis; L-isoleucine biosynthesis; L-isoleucine from 2-oxobutanoate: step 3/4. The protein operates within amino-acid biosynthesis; L-valine biosynthesis; L-valine from pyruvate: step 3/4. Functions in the biosynthesis of branched-chain amino acids. Catalyzes the dehydration of (2R,3R)-2,3-dihydroxy-3-methylpentanoate (2,3-dihydroxy-3-methylvalerate) into 2-oxo-3-methylpentanoate (2-oxo-3-methylvalerate) and of (2R)-2,3-dihydroxy-3-methylbutanoate (2,3-dihydroxyisovalerate) into 2-oxo-3-methylbutanoate (2-oxoisovalerate), the penultimate precursor to L-isoleucine and L-valine, respectively. The polypeptide is Dihydroxy-acid dehydratase (Nocardioides sp. (strain ATCC BAA-499 / JS614)).